Here is a 126-residue protein sequence, read N- to C-terminus: Histone H2B 1.1 (126 aa).

The segment covering 1–12 has biased composition (low complexity); the sequence is MPEPAKSAPAPK. Residues 1–35 form a disordered region; the sequence is MPEPAKSAPAPKKGSKKAVTKTQKKDGKKRRKSRK. N6-acetyllysine occurs at positions 6 and 13. Phosphoserine is present on S15. N6-acetyllysine occurs at positions 16 and 21. The O-linked (GlcNAc) serine glycan is linked to S113. K121 is covalently cross-linked (Glycyl lysine isopeptide (Lys-Gly) (interchain with G-Cter in ubiquitin)).

Belongs to the histone H2B family. The nucleosome is a histone octamer containing two molecules each of H2A, H2B, H3 and H4 assembled in one H3-H4 heterotetramer and two H2A-H2B heterodimers. The octamer wraps approximately 147 bp of DNA. In terms of processing, monoubiquitination of Lys-121 by BRE1 gives a specific tag for epigenetic transcriptional activation and is also prerequisite for histone H3 'Lys-4' and 'Lys-79' methylation. Post-translationally, phosphorylated on Ser-15 during developmentally programmed apoptosis; which may facilitate apoptotic chromatin condensation. GlcNAcylation at Ser-113 promotes monoubiquitination of Lys-121. It fluctuates in response to extracellular glucose, and associates with transcribed genes.

It localises to the nucleus. The protein localises to the chromosome. In terms of biological role, core component of nucleosome. Nucleosomes wrap and compact DNA into chromatin, limiting DNA accessibility to the cellular machineries which require DNA as a template. Histones thereby play a central role in transcription regulation, DNA repair, DNA replication and chromosomal stability. DNA accessibility is regulated via a complex set of post-translational modifications of histones, also called histone code, and nucleosome remodeling. The polypeptide is Histone H2B 1.1 (Xenopus laevis (African clawed frog)).